A 235-amino-acid chain; its full sequence is Large ribosomal subunit protein uL1 (235 aa).

This sequence belongs to the universal ribosomal protein uL1 family. Part of the 50S ribosomal subunit.

Functionally, binds directly to 23S rRNA. The L1 stalk is quite mobile in the ribosome, and is involved in E site tRNA release. Its function is as follows. Protein L1 is also a translational repressor protein, it controls the translation of the L11 operon by binding to its mRNA. In Arthrobacter sp. (strain FB24), this protein is Large ribosomal subunit protein uL1.